The chain runs to 251 residues: Imidazole glycerol phosphate synthase subunit HisF (251 aa).

Active-site residues include aspartate 11 and aspartate 130.

It belongs to the HisA/HisF family. As to quaternary structure, heterodimer of HisH and HisF.

It is found in the cytoplasm. The catalysed reaction is 5-[(5-phospho-1-deoxy-D-ribulos-1-ylimino)methylamino]-1-(5-phospho-beta-D-ribosyl)imidazole-4-carboxamide + L-glutamine = D-erythro-1-(imidazol-4-yl)glycerol 3-phosphate + 5-amino-1-(5-phospho-beta-D-ribosyl)imidazole-4-carboxamide + L-glutamate + H(+). Its pathway is amino-acid biosynthesis; L-histidine biosynthesis; L-histidine from 5-phospho-alpha-D-ribose 1-diphosphate: step 5/9. Functionally, IGPS catalyzes the conversion of PRFAR and glutamine to IGP, AICAR and glutamate. The HisF subunit catalyzes the cyclization activity that produces IGP and AICAR from PRFAR using the ammonia provided by the HisH subunit. This chain is Imidazole glycerol phosphate synthase subunit HisF, found in Thiobacillus denitrificans (strain ATCC 25259 / T1).